The chain runs to 58 residues: Large ribosomal subunit protein bL32 (58 aa).

The protein belongs to the bacterial ribosomal protein bL32 family.

The chain is Large ribosomal subunit protein bL32 from Anaplasma phagocytophilum (strain HZ).